The sequence spans 124 residues: Hydrogenase maturation factor HypA (124 aa).

Histidine 2 serves as a coordination point for Ni(2+). The Zn(2+) site is built by cysteine 78, cysteine 81, cysteine 97, and cysteine 100.

It belongs to the HypA/HybF family.

Involved in the maturation of [NiFe] hydrogenases. Required for nickel insertion into the metal center of the hydrogenase. This chain is Hydrogenase maturation factor HypA, found in Methanocaldococcus jannaschii (strain ATCC 43067 / DSM 2661 / JAL-1 / JCM 10045 / NBRC 100440) (Methanococcus jannaschii).